The chain runs to 192 residues: Nucleotidase CA_C3379 (192 aa).

The protein belongs to the 5'(3')-deoxyribonucleotidase family. The cofactor is Mg(2+).

The catalysed reaction is sugar phosphate + H2O = sugar + phosphate.. Its function is as follows. Catalyzes the dephosphorylation of nucleotide monophosphates and of different sugar phosphates in vitro. This Clostridium acetobutylicum (strain ATCC 824 / DSM 792 / JCM 1419 / IAM 19013 / LMG 5710 / NBRC 13948 / NRRL B-527 / VKM B-1787 / 2291 / W) protein is Nucleotidase CA_C3379.